A 579-amino-acid chain; its full sequence is Probable cytochrome c biosynthesis protein (579 aa).

This sequence belongs to the CcmF/CycK/Ccl1/NrfE/CcsA family.

The protein localises to the mitochondrion. In terms of biological role, could be involved in assembly and maturation of cytochromes c. May play a role in guidance of apocytochromes and heme groups for the covalent linkage introduced by the cytochrome-c-heme lyase. This is Probable cytochrome c biosynthesis protein from Daucus carota (Wild carrot).